The following is a 295-amino-acid chain: 4-hydroxybenzoate octaprenyltransferase (295 aa).

The next 8 membrane-spanning stretches (helical) occupy residues 28–48, 55–75, 103–123, 147–167, 175–195, 219–239, 241–261, and 275–295; these read PIGIYLLLWPTLWAVWIAADG, VLIFTCGVILMRSAGCVINDF, WALFAVLVALSFGLVLLTDPF, LPQLVLGAAYSWGIPMAFTAA, AWLIFAANLAWTVAYDTYYAM, AIILALQGLTLGLLLVVGMRL, LGPYFHLGLLVAALCFAWEFV, and FLHNHWAGLAILVGLILDYGI.

This sequence belongs to the UbiA prenyltransferase family. Mg(2+) serves as cofactor.

It is found in the cell inner membrane. It carries out the reaction all-trans-octaprenyl diphosphate + 4-hydroxybenzoate = 4-hydroxy-3-(all-trans-octaprenyl)benzoate + diphosphate. Its pathway is cofactor biosynthesis; ubiquinone biosynthesis. Its function is as follows. Catalyzes the prenylation of para-hydroxybenzoate (PHB) with an all-trans polyprenyl group. Mediates the second step in the final reaction sequence of ubiquinone-8 (UQ-8) biosynthesis, which is the condensation of the polyisoprenoid side chain with PHB, generating the first membrane-bound Q intermediate 3-octaprenyl-4-hydroxybenzoate. This is 4-hydroxybenzoate octaprenyltransferase from Azotobacter vinelandii (strain DJ / ATCC BAA-1303).